The primary structure comprises 430 residues: Dolichyl-diphosphooligosaccharide--protein glycosyltransferase subunit WBP1 (430 aa).

The N-terminal stretch at 1 to 20 is a signal peptide; sequence MRTDWNFFFCILLQAIFVVG. Residues 24 to 393 lie on the Lumenal side of the membrane; sequence SRTLVLYDQS…PRSWEISNSW (370 aa). 2 N-linked (GlcNAc...) asparagine glycosylation sites follow: N60 and N332. A helical transmembrane segment spans residues 394–414; sequence VYISAICGVIVAWIFFVVSFV. Residues 415–430 lie on the Cytoplasmic side of the membrane; that stretch reads TTSSVGKKLETFKKTN.

The protein belongs to the DDOST 48 kDa subunit family. In terms of assembly, component of the oligosaccharyltransferase (OST) complex, which appears to exist in two assemblies comprising OST1, OST2, OST4, OST5, STT3, SWP1, WPB1, and either OST3 or OST6. OST assembly occurs through the formation of 3 subcomplexes. Subcomplex 1 contains OST1 and OST5, subcomplex 2 contains STT3, OST3, and OST4, and subcomplex 3 contains OST2, WBP1, and SWP1. Interacts with SEC61, SBH1 and SSS1.

It is found in the endoplasmic reticulum membrane. The protein operates within protein modification; protein glycosylation. In terms of biological role, subunit of the oligosaccharyl transferase (OST) complex that catalyzes the initial transfer of a defined glycan (Glc(3)Man(9)GlcNAc(2) in eukaryotes) from the lipid carrier dolichol-pyrophosphate to an asparagine residue within an Asn-X-Ser/Thr consensus motif in nascent polypeptide chains, the first step in protein N-glycosylation. N-glycosylation occurs cotranslationally and the complex associates with the Sec61 complex at the channel-forming translocon complex that mediates protein translocation across the endoplasmic reticulum (ER). All subunits are required for a maximal enzyme activity. The chain is Dolichyl-diphosphooligosaccharide--protein glycosyltransferase subunit WBP1 (WBP1) from Saccharomyces cerevisiae (strain ATCC 204508 / S288c) (Baker's yeast).